We begin with the raw amino-acid sequence, 254 residues long: Proteasome activator complex subunit 3 (254 aa).

An N6-acetyllysine mark is found at Lys-6 and Lys-14. Lys-195 is subject to N6-acetyllysine; by P300/CBP.

In terms of assembly, homoheptamer. Post-translationally, acetylation at the major site Lys-195 is important for oligomerization and ability to degrade its target substrates. Deacetylated by SIRT1.

Functionally, implicated in immunoproteasome assembly and required for efficient antigen processing. The PA28 activator complex enhances the generation of class I binding peptides by altering the cleavage pattern of the proteasome. The chain is Proteasome activator complex subunit 3 from Gallus gallus (Chicken).